Consider the following 149-residue polypeptide: C-type lectin domain family 2 member B (149 aa).

At 1–7 (MMTKHKK) the chain is on the cytoplasmic side. Residues 8–25 (CFIIVGVLITTNIITLIV) traverse the membrane as a helical; Signal-anchor for type II membrane protein segment. The Extracellular segment spans residues 26–149 (KLTRDSQSLC…RKWICRKRIH (124 aa)). Residues cysteine 35 and cysteine 46 are joined by a disulfide bond. The C-type lectin domain maps to 42–145 (FQNKCYYFSK…CYTERKWICR (104 aa)). N-linked (GlcNAc...) asparagine glycans are attached at residues asparagine 57, asparagine 62, and asparagine 100. Intrachain disulfides connect cysteine 63/cysteine 144 and cysteine 123/cysteine 136.

Homodimer. Interacts with NKp80/KLRF1. (Microbial infection) Ubiquitinated by human herpesvirus 8 protein K5, leading to endolysosomal degradation. Post-translationally, N-linked glycosylated; required to enable surface expression and the extent of surface expression correlates with the number of functional conventional N-glycosylation sites. As to expression, expressed preferentially in lymphoid tissues, and in most hematopoietic cell types.

The protein resides in the cell membrane. It is found in the golgi apparatus membrane. Functionally, membrane-bound protein expressed on myeloid cells which acts as a ligand to stimulate the activating receptor NKp80/KLRF1, expressed on the surface of natural killer (NK) cells. In turn, stimulates NK-cell cytotoxicity and cytokine production leading to the cytolysis of malignant CLEC2B-expressing myeloid cells. This Homo sapiens (Human) protein is C-type lectin domain family 2 member B (CLEC2B).